The chain runs to 633 residues: 1-deoxy-D-xylulose-5-phosphate synthase (633 aa).

Thiamine diphosphate is bound by residues His72 and 113–115; that span reads GHS. Asp144 contacts Mg(2+). Residues 145 to 146, Asn173, Tyr284, and Glu367 each bind thiamine diphosphate; that span reads GA. Residue Asn173 participates in Mg(2+) binding.

This sequence belongs to the transketolase family. DXPS subfamily. In terms of assembly, homodimer. Mg(2+) serves as cofactor. The cofactor is thiamine diphosphate.

The enzyme catalyses D-glyceraldehyde 3-phosphate + pyruvate + H(+) = 1-deoxy-D-xylulose 5-phosphate + CO2. The protein operates within metabolic intermediate biosynthesis; 1-deoxy-D-xylulose 5-phosphate biosynthesis; 1-deoxy-D-xylulose 5-phosphate from D-glyceraldehyde 3-phosphate and pyruvate: step 1/1. In terms of biological role, catalyzes the acyloin condensation reaction between C atoms 2 and 3 of pyruvate and glyceraldehyde 3-phosphate to yield 1-deoxy-D-xylulose-5-phosphate (DXP). The sequence is that of 1-deoxy-D-xylulose-5-phosphate synthase from Bacillus velezensis (strain DSM 23117 / BGSC 10A6 / LMG 26770 / FZB42) (Bacillus amyloliquefaciens subsp. plantarum).